Reading from the N-terminus, the 478-residue chain is Alpha-(1,3)-fucosyltransferase FucT (478 aa).

Residues Gly-94, 186–189, Arg-195, 222–225, Asn-240, and 246–250 contribute to the substrate site; these read VASN, VKNK, and YVTEK. The segment at 347–353 is important for acceptor specificity; it reads DNPFIFC. A run of 10 repeats spans residues 364-370, 371-377, 378-384, 385-391, 392-398, 399-405, 406-412, 413-419, 420-426, and 427-433. Positions 364 to 433 are 10 X 7 AA tandem repeat of D-D-L-R-[IV]-N-Y; sequence DDLRVNYDDL…VNYDDLRVNY (70 aa). Positions 434–478 are may be involved in membrane binding; that stretch reads ERLLSKATPLLELSQNTTSKIYRKAYQKSLPLLRAIRRWVKKLGL.

The protein belongs to the glycosyltransferase 10 family. As to quaternary structure, homodimer.

The protein resides in the membrane. It is found in the cytoplasm. The catalysed reaction is a beta-D-galactosyl-(1-&gt;4)-N-acetyl-beta-D-glucosaminyl derivative + GDP-beta-L-fucose = a beta-D-galactosyl-(1-&gt;4)-[alpha-L-fucosyl-(1-&gt;3)]-N-acetyl-beta-D-glucosaminyl derivative + GDP + H(+). Its pathway is lipopolysaccharide biosynthesis; LPS oligosaccharide biosynthesis. Involved in the biosynthesis of the Lewis X (LeX) trisaccharide of the lipopolysaccharide (LPS) O-antigen. Catalyzes the addition of fucose in alpha 1-3 linkage to Gal-beta-1-4-GlcNAc-beta-O-R (LacNAc-R) type II acceptor. The sequence is that of Alpha-(1,3)-fucosyltransferase FucT from Helicobacter pylori (Campylobacter pylori).